The following is a 109-amino-acid chain: Nucleoid-associated protein Shal_1591 (109 aa).

The interval 87-109 is disordered; sequence NQKEKMAEVTGGMQLPPGMKMPF.

Belongs to the YbaB/EbfC family. In terms of assembly, homodimer.

Its subcellular location is the cytoplasm. The protein localises to the nucleoid. Its function is as follows. Binds to DNA and alters its conformation. May be involved in regulation of gene expression, nucleoid organization and DNA protection. The chain is Nucleoid-associated protein Shal_1591 from Shewanella halifaxensis (strain HAW-EB4).